The sequence spans 256 residues: Tryptophan synthase alpha chain (256 aa).

Active-site proton acceptor residues include glutamate 44 and aspartate 55.

Belongs to the TrpA family. As to quaternary structure, tetramer of two alpha and two beta chains.

The enzyme catalyses (1S,2R)-1-C-(indol-3-yl)glycerol 3-phosphate + L-serine = D-glyceraldehyde 3-phosphate + L-tryptophan + H2O. Its pathway is amino-acid biosynthesis; L-tryptophan biosynthesis; L-tryptophan from chorismate: step 5/5. The alpha subunit is responsible for the aldol cleavage of indoleglycerol phosphate to indole and glyceraldehyde 3-phosphate. This Coxiella burnetii (strain CbuK_Q154) (Coxiella burnetii (strain Q154)) protein is Tryptophan synthase alpha chain.